The following is a 257-amino-acid chain: Deoxyribose-phosphate aldolase (257 aa).

Aspartate 102 serves as the catalytic Proton donor/acceptor. The active-site Schiff-base intermediate with acetaldehyde is the lysine 166. The Proton donor/acceptor role is filled by lysine 198.

The protein belongs to the DeoC/FbaB aldolase family. DeoC type 2 subfamily.

The protein resides in the cytoplasm. It carries out the reaction 2-deoxy-D-ribose 5-phosphate = D-glyceraldehyde 3-phosphate + acetaldehyde. It participates in carbohydrate degradation; 2-deoxy-D-ribose 1-phosphate degradation; D-glyceraldehyde 3-phosphate and acetaldehyde from 2-deoxy-alpha-D-ribose 1-phosphate: step 2/2. Catalyzes a reversible aldol reaction between acetaldehyde and D-glyceraldehyde 3-phosphate to generate 2-deoxy-D-ribose 5-phosphate. This is Deoxyribose-phosphate aldolase from Shewanella piezotolerans (strain WP3 / JCM 13877).